The chain runs to 213 residues: DELTA-actitoxin-Aas1a (213 aa).

The signal sequence occupies residues 1 to 19 (MSRLIIAFIVVTMVCSAIA). Positions 20–34 (LPKKKVEPLEKDEKR) are excised as a propeptide. A plays an important role in the hemolytic activity region spans residues 37–46 (AVAGAVIEGG). The interval 45–64 (GGNLVMSVLDRILEAIGDVN) is N-terminal region. The phosphocholine site is built by serine 88, valine 121, serine 139, proline 141, tyrosine 167, tyrosine 171, and tyrosine 172. The tract at residues 139-154 (SIPYDYNLYSNWWNVK) is trp-rich region, which is important for the binding to lipid membrane. The short motif at 178-180 (KGD) is the Cell attachment site, crucial for protein stability element.

Belongs to the actinoporin family. Sea anemone subfamily. Octamer or nonamer in membranes. Monomer in the soluble state.

It localises to the secreted. The protein localises to the nematocyst. Its subcellular location is the target cell membrane. In terms of biological role, pore-forming protein that forms cation-selective hydrophilic pores of around 1 nm and causes cytolysis. Pore formation is a multi-step process that involves specific recognition of membrane sphingomyelin (but neither cholesterol nor phosphatidylcholine) using aromatic rich region and adjacent phosphocholine (POC) binding site, firm binding to the membrane (mainly driven by hydrophobic interactions) accompanied by the transfer of the N-terminal region to the lipid-water interface and finally pore formation after oligomerization of monomers. This protein shows potent hemolytic activity (EC(50)=8.8 ng/ml) that is specifically inhibited by sphingomyelin. Shows no phospholipase A2 activity, nor antimicrobial activity against the four bacteria tested. Is lethal to crayfish. This is DELTA-actitoxin-Aas1a from Anthopleura asiatica (Sea anemone).